Here is a 439-residue protein sequence, read N- to C-terminus: MGSISSPSLIIDLANAVSSAAKNLDTQLQSQGFPQPSFEADGPTYVVPKDAPKAAHEARVATAEAALKLFNLVSGPSELLPNMTASYHTIFALQWLHHFDVFSHIPLDGSLSYEKLATKANVPESLLKSVARMAMTSNILAEPTTGQVAHSANSAMFVKFPNMRDWASYMFTASIPTAAAMVQATEKWPGSVKKTETAYNIAFNHDLPFFDHLSQSPVMTKQFSGYMRSVTDGQGMDLSHLVNGFDWASLPDKSLIVDIGGSAGHASYALAAAYPHLRFEVQDLDTVVNGEKAAKEHEEAVSKHVIGTDNRVTFKAHNFFEAQPTKDATVYMLRMIIHDWPDAEAKTILGNLVPALESAKATLLIMDTVLPSPGSIPSVRERVIRTRDLTMRQVFNAKERGVDDWEAILRETDSRLTLKNLRQPEGSNMCLLTISLQDD.

Asp283 contributes to the S-adenosyl-L-methionine binding site. Catalysis depends on His338, which acts as the Proton acceptor.

This sequence belongs to the class I-like SAM-binding methyltransferase superfamily. Cation-independent O-methyltransferase family. COMT subfamily.

The enzyme catalyses norrubrofusarin + S-adenosyl-L-methionine = rubrofusarin + S-adenosyl-L-homocysteine + H(+). It functions in the pathway pigment biosynthesis. O-methyltransferase; part of the gene cluster that mediates the biosynthesis of aurofusarin, a red mycelium pigment which is acting as a mycotoxin. The first step is performed by the polyketide synthase which condenses one acetyl-CoA and 6 malonyl-CoA units to form the first intermediate, the cyclic heptaketide and yellow pigment YWA1. The C2 hydroxyl group in the pyrone ring of YWA1 is probably formed during ring closure by an aldol-type cyclization reaction. The dehydratase aurZ then acts as the first tailoring enzyme in the aurofusarin biosynthetic pathway by converting YWA1 to nor-rubrofusarin. Nor-rubrofusarin is then methylated to rubrofusarin by the O-methyltransferase aurJ. Rubrofusarin is then transported across the plasma membrane by the rubrofusarin-specific pump aurT for further enzymatic processing by the extracellular complex composed of GIP1, aurF, aurO and aurS to yield aurofusarin. The chain is O-methyltransferase aurJ from Gibberella zeae (strain ATCC MYA-4620 / CBS 123657 / FGSC 9075 / NRRL 31084 / PH-1) (Wheat head blight fungus).